The chain runs to 516 residues: Acetylcholine receptor subunit delta (516 aa).

The N-terminal stretch at 1–21 is a signal peptide; the sequence is MEGSVLTLVLLAALVVCGSWG. The Extracellular portion of the chain corresponds to 22–244; it reads LNEEERLIRH…VTFYLIIRRK (223 aa). 2 N-linked (GlcNAc...) asparagine glycosylation sites follow: Asn96 and Asn163. A disulfide bond links Cys150 and Cys164. Transmembrane regions (helical) follow at residues 245-269, 279-296, and 311-332; these read PLFY…VFYL, MAIS…LISK, and FLLF…VLNI. The Cytoplasmic segment spans residues 333 to 470; sequence HFRTPSTHVL…WNRVARTVDR (138 aa). Tyr389 bears the Phosphotyrosine; by Tyr-kinases mark. The helical transmembrane segment at 471–493 threads the bilayer; it reads LCLFVVTPIMVVGTAWIFLQGAY.

This sequence belongs to the ligand-gated ion channel (TC 1.A.9) family. Acetylcholine receptor (TC 1.A.9.1) subfamily. Delta/CHRND sub-subfamily. In terms of assembly, pentamer of two alpha chains, and one each of the beta, delta, and gamma (in immature muscle) or epsilon (in mature muscle) chains. The muscle heteropentamer composed of alpha-1, beta-1, delta, epsilon subunits interacts with the alpha-conotoxin ImII.

The protein localises to the postsynaptic cell membrane. Its subcellular location is the cell membrane. The catalysed reaction is K(+)(in) = K(+)(out). The enzyme catalyses Na(+)(in) = Na(+)(out). In terms of biological role, after binding acetylcholine, the AChR responds by an extensive change in conformation that affects all subunits and leads to opening of an ion-conducting channel across the plasma membrane. This Bos taurus (Bovine) protein is Acetylcholine receptor subunit delta (CHRND).